A 613-amino-acid polypeptide reads, in one-letter code: Kelch-like protein 36 (613 aa).

Residues 45-112 (CDVVLVVEEQ…LYSSELELDG (68 aa)) enclose the BTB domain. In terms of domain architecture, BACK spans 147 to 249 (YLYLQELASI…PEDILLQRVK (103 aa)). Kelch repeat units lie at residues 294–343 (CLLF…VLGG), 344–395 (FIFI…SIED), 396–442 (MLVA…IYKD), 444–491 (VYIS…SLGD), 492–544 (SIYS…VWQG), and 545–593 (RIYI…VCAL).

In terms of assembly, interacts with CUL3.

The protein operates within protein modification; protein ubiquitination. Probable substrate-specific adapter of an E3 ubiquitin-protein ligase complex which mediates the ubiquitination and subsequent proteasomal degradation of target proteins. The sequence is that of Kelch-like protein 36 (Klhl36) from Mus musculus (Mouse).